We begin with the raw amino-acid sequence, 526 residues long: mRNA export factor ICP27 homolog (526 aa).

4 residues coordinate Zn(2+): cysteine 239, histidine 344, cysteine 346, and cysteine 351. The CHC2-type zinc-finger motif lies at 239–351; it reads CVFNDNGHGD…NNHQCDDIGC (113 aa).

This sequence belongs to the HHV-1 ICP27 protein family.

It localises to the virion tegument. The protein resides in the virion. Its subcellular location is the host nucleus. It is found in the host cytoplasm. In terms of biological role, immediate early (EI) protein that plays many roles during productive infection including regulation of viral gene expression and nuclear export of intronless viral RNAs. The protein is mRNA export factor ICP27 homolog of Human herpesvirus 7 (strain JI) (HHV-7).